The sequence spans 591 residues: DDB1- and CUL4-associated factor 8 (591 aa).

A compositionally biased stretch (basic and acidic residues) spans 1–14 (MSSKRPSTDGRRDL). The tract at residues 1–140 (MSSKRPSTDG…EDWVSSETTA (140 aa)) is disordered. A phosphoserine mark is found at Ser21 and Ser22. A Nuclear export signal motif is present at residues 39 to 50 (IEVEASDLSLSL). 2 stretches are compositionally biased toward basic and acidic residues: residues 65 to 99 (RGTDTESSGEEKDSDSMEDTGHYSINDENRVHGHS) and 118 to 131 (SRDQDSSDDERALE). 3 positions are modified to phosphoserine: Ser99, Ser123, and Ser124. WD repeat units lie at residues 185-224 (GHTGCVNTLHFNQRGTWLASGSDDLKVVVWDWVRRQPVLD), 228-269 (GHKS…CCKN), 275-315 (QHKG…PASK), 323-363 (EKKV…ENEN), 379-418 (ESKANITCLVYSHDGTELLASYNDEDIYLFNSSHSDGAQY), 426-466 (RNNA…IIQF), and 470-509 (DKGGVVNCLEPHPHLPVLATSGLDHDVKIWAPTAEASTEL). Arg198 is subject to Omega-N-methylarginine; by PRMT1. The disordered stretch occupies residues 552-591 (HRRWREPGVGATDADSDESPSSSDTSDEEEGPDRVQCMPS).

Belongs to the WD repeat DCAF8 family. Interacts with DDB1, CUL4A and CUL4B. Interacts with KPNA1, KPNB1 and XPO1.

It localises to the nucleus. The protein localises to the cytoplasm. It participates in protein modification; protein ubiquitination. Functionally, may function as a substrate receptor for CUL4-DDB1 E3 ubiquitin-protein ligase complex. The chain is DDB1- and CUL4-associated factor 8 (Dcaf8) from Rattus norvegicus (Rat).